A 408-amino-acid polypeptide reads, in one-letter code: E3 ubiquitin-protein ligase IE2 (408 aa).

The span at 1 to 10 (MSRQINAATP) shows a compositional bias: polar residues. Disordered stretches follow at residues 1–67 (MSRQ…ENVQ) and 176–199 (QSPD…QSEP). Residues 13 to 25 (SRRHRLSLSRRRI) are compositionally biased toward basic residues. Residues 30–47 (SPEAQPSSSSRSQPSSSS) show a composition bias toward low complexity. Tandem repeats lie at residues 34-41 (QPSSSSRS), 42-49 (QPSSSSRS), 51-54 (RRQE), and 55-58 (RRQE). Residues 34–49 (QPSSSSRSQPSSSSRS) form a 2 X 8 AA tandem repeats of Q-P-S-S-S-S-R-S region. The segment at 51–58 (RRQERRQE) is 2 X 4 AA tandem repeats of R-R-Q-E. The span at 183 to 197 (SPQSPQPQQQQQQQS) shows a compositional bias: low complexity. The RING-type zinc finger occupies 207–255 (CNICFTTFKDTKNVNSSFVTSIHCNHAVCFKCYVKIIMDNSVYKCFCSA).

The protein belongs to the alphabaculovirus IE2 protein family. As to quaternary structure, homooligomer. In terms of processing, auto-ubiquitinated.

Its subcellular location is the host nucleus. It carries out the reaction S-ubiquitinyl-[E2 ubiquitin-conjugating enzyme]-L-cysteine + [acceptor protein]-L-lysine = [E2 ubiquitin-conjugating enzyme]-L-cysteine + N(6)-ubiquitinyl-[acceptor protein]-L-lysine.. Functionally, RING-finger E3 ubiquitin ligase that plays an important regulatory role during the initial stages of infection. Migrates to specific nuclear foci early in infection supposely to prepare the sites for viral transcription and replication by targeting and ubiquitinating host proteins. Acts as a transcriptional activator and activates a number of viral promoters including itself, IE1 and the promoter of 39K gene. In Lepidoptera (butterflies and moths), this protein is E3 ubiquitin-protein ligase IE2 (IE2).